Here is a 308-residue protein sequence, read N- to C-terminus: Elongation factor Ts (308 aa).

The tract at residues 80-83 is involved in Mg(2+) ion dislocation from EF-Tu; sequence TDFV.

This sequence belongs to the EF-Ts family.

It localises to the cytoplasm. Associates with the EF-Tu.GDP complex and induces the exchange of GDP to GTP. It remains bound to the aminoacyl-tRNA.EF-Tu.GTP complex up to the GTP hydrolysis stage on the ribosome. This is Elongation factor Ts from Rhizobium etli (strain CIAT 652).